A 150-amino-acid polypeptide reads, in one-letter code: Deoxyuridine 5'-triphosphate nucleotidohydrolase (150 aa).

Residues 69-71, asparagine 82, 86-88, and methionine 96 each bind substrate; these read RSG and LID.

It belongs to the dUTPase family. The cofactor is Mg(2+).

It catalyses the reaction dUTP + H2O = dUMP + diphosphate + H(+). It functions in the pathway pyrimidine metabolism; dUMP biosynthesis; dUMP from dCTP (dUTP route): step 2/2. This enzyme is involved in nucleotide metabolism: it produces dUMP, the immediate precursor of thymidine nucleotides and it decreases the intracellular concentration of dUTP so that uracil cannot be incorporated into DNA. In Acinetobacter baumannii (strain AB307-0294), this protein is Deoxyuridine 5'-triphosphate nucleotidohydrolase.